The primary structure comprises 626 residues: Probable potassium transport system protein Kup (626 aa).

12 consecutive transmembrane segments (helical) span residues 11–31 (FLTLSAGALGVVYGDIGTSPL), 55–75 (LSLIFWALFIIVAVKYVVFVM), 103–123 (AWIISLGLFGTALFYGDGMIT), 140–160 (AALSHYVVPASILILLALFLI), 171–191 (LFGPIMLLWFLSIGTLGFVSL), 216–236 (LGFAALGAVVLAVTGAEALYA), 250–270 (WFAVVFPSLILNYLGQGALLI), 282–302 (LLVPEWALYPMIGLATAATVI), 340–360 (IYAPAVNRLLLISVLALVLAF), 369–389 (AYGLAVVGTMVVTTLLALVVA), 395–415 (WPGLALLVTGAVLLSVDLSFL), and 422–442 (LGDGGWIPLSLGLILATVMST).

Belongs to the HAK/KUP transporter (TC 2.A.72) family.

The protein localises to the cell inner membrane. It catalyses the reaction K(+)(in) + H(+)(in) = K(+)(out) + H(+)(out). Transport of potassium into the cell. Likely operates as a K(+):H(+) symporter. The protein is Probable potassium transport system protein Kup of Methylococcus capsulatus (strain ATCC 33009 / NCIMB 11132 / Bath).